The sequence spans 43 residues: Defensin (43 aa).

Cystine bridges form between cysteine 3-cysteine 34, cysteine 20-cysteine 39, and cysteine 24-cysteine 41.

It localises to the secreted. Antibacterial peptide. Affects Gram-negative bacteria including methicillin-resistant Staphylococcus aureus. This chain is Defensin, found in Trypoxylus dichotomus (Japanese rhinoceros beetle).